A 154-amino-acid chain; its full sequence is Transcriptional repressor NrdR (154 aa).

Residues 1-22 are disordered; sequence MECPNCHKNASRVIDSRPSDEN. Residues 3–34 fold into a zinc finger; it reads CPNCHKNASRVIDSRPSDENRAIRRRRECENC. Residues 49–139 form the ATP-cone domain; it reads LLVVKNDGTR…IYRQFKDVSG (91 aa).

It belongs to the NrdR family. The cofactor is Zn(2+).

Functionally, negatively regulates transcription of bacterial ribonucleotide reductase nrd genes and operons by binding to NrdR-boxes. The polypeptide is Transcriptional repressor NrdR (Lactobacillus johnsonii (strain CNCM I-12250 / La1 / NCC 533)).